The primary structure comprises 116 residues: Propanediol dehydratase-reactivating factor small subunit (116 aa).

Glu-31 provides a ligand contact to Mg(2+).

It belongs to the DdrB/PduH family. Forms a heterotetramer PduG(2)/PduH(2). Mg(2+) serves as cofactor.

The protein resides in the bacterial microcompartment. The enzyme catalyses ATP + H2O = ADP + phosphate + H(+). It functions in the pathway polyol metabolism; 1,2-propanediol degradation. Functionally, small subunit of the propanediol dehydratase-reactivating factor (DDR), which reactivates suicidally inhibited adenosylcobalamin-dependent propanediol dehydratase (diol dehydratase, DDH) found in the bacterial microcompartment (BMC) dedicated to 1,2-propanediol (1,2-PD) degradation. Reactivates inactivated DDH in the presence of ATP, Mg(2+) and free adenosylcobalamin (AdoCbl), by mediating the exchange of the tightly bound damaged cofactor AdoCbl for a free intact one. Its function is as follows. The 1,2-PD-specific bacterial microcompartment (BMC) concentrates low levels of 1,2-PD catabolic enzymes, concentrates volatile reaction intermediates thus enhancing pathway flux and keeps the level of toxic, mutagenic propionaldehyde low. This chain is Propanediol dehydratase-reactivating factor small subunit, found in Salmonella typhimurium (strain LT2 / SGSC1412 / ATCC 700720).